The sequence spans 471 residues: Putative ABC transporter ATP-binding protein STK_11360 (471 aa).

2 ABC transporter domains span residues 4-241 and 255-470; these read LEIK…LEPL and VILE…VIKD. ATP-binding positions include 37-44 and 286-293; these read GKSGSGKS and GDNGSGKS.

The protein belongs to the ABC transporter superfamily.

The protein resides in the cell membrane. Its function is as follows. Probably part of an ABC transporter complex. Responsible for energy coupling to the transport system. The chain is Putative ABC transporter ATP-binding protein STK_11360 from Sulfurisphaera tokodaii (strain DSM 16993 / JCM 10545 / NBRC 100140 / 7) (Sulfolobus tokodaii).